The sequence spans 309 residues: MRRKVSIIGAGAVGATTAQYLAARNIADLVLVDIVENLPQGKALDLLEAGPVLGYDCQIVGSNSYDATAGSDVIVITSGSPRKPGMSRDDLLRVNMNIVRSVTEQAAPLSPDAVIIVVTNPLDAMCHVALEASGFPPARVVGQAGVLDAARFRAFVALELGVSPRDVHAMVLGGHGDTMVPLPRYTTVSGIPITQLIPADRIQAIVERTRDGGGEIVRLLGTSAFYAPAASVAEMVEAVLLDANRVLAASTYLTGQYGIHDLYVGVPIRLGAGGVKEIIEVELTDEERAALHRSANAVRELVQAMKQLT.

NAD(+) is bound by residues 9–14 (GAGAVG) and Asp-33. Substrate is bound by residues Arg-82 and Arg-88. NAD(+) is bound by residues Asn-95 and 118–120 (VTN). Residues Asn-120 and Arg-151 each contribute to the substrate site. Residue His-175 is the Proton acceptor of the active site.

Belongs to the LDH/MDH superfamily. MDH type 3 family.

It carries out the reaction (S)-malate + NAD(+) = oxaloacetate + NADH + H(+). Its function is as follows. Catalyzes the reversible oxidation of malate to oxaloacetate. The polypeptide is Malate dehydrogenase (Thermomicrobium roseum (strain ATCC 27502 / DSM 5159 / P-2)).